Here is a 154-residue protein sequence, read N- to C-terminus: MRVALLVIGRPRHAGLADAIRDYEGRAAHYWPLDVIEVKEEPGRNLSADVVREREAERLVARLPADAVVVACDPGGVTMDSAQFARWLQEQRESARNVAFVIGGAHGLGPAVRERANRRLSLAPWTLPHEVARMVMAEQLYRAGTIIRGEPYHK.

G103 is a binding site for S-adenosyl-L-methionine.

It belongs to the RNA methyltransferase RlmH family. Homodimer.

The protein resides in the cytoplasm. The enzyme catalyses pseudouridine(1915) in 23S rRNA + S-adenosyl-L-methionine = N(3)-methylpseudouridine(1915) in 23S rRNA + S-adenosyl-L-homocysteine + H(+). In terms of biological role, specifically methylates the pseudouridine at position 1915 (m3Psi1915) in 23S rRNA. This chain is Ribosomal RNA large subunit methyltransferase H, found in Gemmatimonas aurantiaca (strain DSM 14586 / JCM 11422 / NBRC 100505 / T-27).